Here is a 977-residue protein sequence, read N- to C-terminus: Macrophage colony-stimulating factor 1 receptor (977 aa).

The N-terminal stretch at 1–18 (MFFALLFLIGILLGQVQG) is a signal peptide. Over 19–519 (WSEPRIRLSS…MEVSDQIFTS (501 aa)) the chain is Extracellular. 5 consecutive Ig-like C2-type domains span residues 22–109 (PRIR…VHVF), 120–198 (PSTS…EKVS), 213–305 (PYVY…TQLL), 316–407 (PKLS…ASIT), and 408–513 (FDIK…MEVS). A disulfide bridge connects residues Cys48 and Cys92. N-linked (GlcNAc...) asparagine glycans are attached at residues Asn98, Asn101, Asn154, Asn163, Asn244, Asn286, Asn298, Asn361, Asn424, and Asn455. 2 cysteine pairs are disulfide-bonded: Cys138–Cys187 and Cys234–Cys289. An intrachain disulfide couples Cys430 to Cys495. A helical membrane pass occupies residues 520 to 540 (AMCGSTVAMVVLGLLLIFMIY). Over 541–977 (KYKQKPRYEI…LMKPNNYQFC (437 aa)) the chain is Cytoplasmic. The regulatory juxtamembrane domain stretch occupies residues 544 to 576 (QKPRYEIRWKIIEATNGNNYTFIDPTQLPYNEK). Position 563 is a phosphotyrosine; by autocatalysis (Tyr563). Residues 584 to 917 (LKLGKTLGAG…KISQMIQRML (334 aa)) enclose the Protein kinase domain. Residues 590 to 598 (LGAGAFGKV) and Lys618 each bind ATP. Phosphotyrosine; by autocatalysis occurs at positions 701 and 725. Asp781 functions as the Proton acceptor in the catalytic mechanism. Positions 799-821 (DFGLARDIMNDSNYVVKGNARLP) are activation loop. Residues Tyr812 and Tyr929 each carry the phosphotyrosine; by autocatalysis modification. The disordered stretch occupies residues 919–977 (ETSEQQDTQEYKNIPTEAEAEQQLESCDPVKHEDESFETSCDQEEEDQPLMKPNNYQFC). Over residues 953-966 (ESFETSCDQEEEDQ) the composition is skewed to acidic residues. A Phosphotyrosine; by autocatalysis modification is found at Tyr974.

It belongs to the protein kinase superfamily. Tyr protein kinase family. CSF-1/PDGF receptor subfamily. In terms of assembly, monomer. Homodimer. Interacts with CSF1. Autophosphorylated in response to CSF1 binding. autophosphorylation, leading to its degradation. In terms of processing, ubiquitinated. Becomes rapidly polyubiquitinated after autophosphorylation, leading to its degradation.

The protein localises to the cell membrane. The catalysed reaction is L-tyrosyl-[protein] + ATP = O-phospho-L-tyrosyl-[protein] + ADP + H(+). Present in an inactive conformation in the absence of bound ligand. CSF1 binding leads to dimerization and activation by autophosphorylation on tyrosine residues. Functionally, tyrosine-protein kinase that acts as a cell-surface receptor for CSF1 and plays an essential role in the regulation of survival, proliferation and differentiation of hematopoietic precursor cells, especially mononuclear phagocytes, such as macrophages and monocytes. Plays an important role in innate immunity and in inflammatory processes. Plays an important role in the regulation of osteoclast proliferation and differentiation, the regulation of bone resorption, and is required for normal bone development. Promotes reorganization of the actin cytoskeleton, regulates formation of membrane ruffles, cell adhesion and cell migration. Activates several signaling pathways in response to ligand binding. This chain is Macrophage colony-stimulating factor 1 receptor (csf1r), found in Danio rerio (Zebrafish).